The following is a 554-amino-acid chain: Kinesin-like protein 3 (554 aa).

The Kinesin motor domain occupies 3–325; it reads SIKVVCRIRP…LRFGHRAKSI (323 aa). ATP contacts are provided by residues 84–91 and 233–240; these read GQTGSGKT and GSESVGKS. Residues 446 to 473 adopt a coiled-coil conformation; that stretch reads LSSTKQQLSDLMTALGDAQERYVELVKN.

The protein belongs to the TRAFAC class myosin-kinesin ATPase superfamily. Kinesin family.

It localises to the cytoplasm. Its subcellular location is the cytoskeleton. Functionally, cytoplasmic motor that could play a role in Golgi membrane recycling. This Schizosaccharomyces pombe (strain 972 / ATCC 24843) (Fission yeast) protein is Kinesin-like protein 3 (klp3).